The chain runs to 874 residues: Alanine--tRNA ligase (874 aa).

4 residues coordinate Zn(2+): His-562, His-566, Cys-664, and His-668.

This sequence belongs to the class-II aminoacyl-tRNA synthetase family. The cofactor is Zn(2+).

The protein resides in the cytoplasm. The enzyme catalyses tRNA(Ala) + L-alanine + ATP = L-alanyl-tRNA(Ala) + AMP + diphosphate. Catalyzes the attachment of alanine to tRNA(Ala) in a two-step reaction: alanine is first activated by ATP to form Ala-AMP and then transferred to the acceptor end of tRNA(Ala). Also edits incorrectly charged Ser-tRNA(Ala) and Gly-tRNA(Ala) via its editing domain. The chain is Alanine--tRNA ligase from Neisseria meningitidis serogroup A / serotype 4A (strain DSM 15465 / Z2491).